The primary structure comprises 207 residues: Superoxide dismutase [Mn] (207 aa).

Mn(2+) is bound by residues histidine 28, histidine 76, aspartate 160, and histidine 164.

This sequence belongs to the iron/manganese superoxide dismutase family. As to quaternary structure, homotetramer. Mn(2+) is required as a cofactor.

The protein resides in the secreted. The catalysed reaction is 2 superoxide + 2 H(+) = H2O2 + O2. In terms of biological role, destroys superoxide anion radicals which are normally produced within the cells and which are toxic to biological systems. The protein is Superoxide dismutase [Mn] (sodA) of Mycolicibacterium smegmatis (Mycobacterium smegmatis).